Here is a 147-residue protein sequence, read N- to C-terminus: MVRLTDSEKAEVVSLWSKVDEKIIGSEALGRLLVIYPWTQRFFEHFGDLSTADAIMKNPRVQAHGEKVLSSFGEGLNHLGDLKGTFAQLSELHCDELHVDPENFKLLGNILVVVLARHYGKEFTLEVQAAYQKFVAGMANALAHKYH.

The region spanning 3–147 (RLTDSEKAEV…MANALAHKYH (145 aa)) is the Globin domain. Heme b is bound by residues histidine 64 and histidine 93.

It belongs to the globin family. In terms of assembly, heterotetramer of two delta chains and two alpha chains. In terms of tissue distribution, red blood cells.

The chain is Hemoglobin subunit deltaH (HBD) from Dendrohyrax dorsalis (Beecroft's tree hyrax).